We begin with the raw amino-acid sequence, 273 residues long: Formamidopyrimidine-DNA glycosylase (273 aa).

The active-site Schiff-base intermediate with DNA is the proline 2. Glutamate 3 functions as the Proton donor in the catalytic mechanism. The active-site Proton donor; for beta-elimination activity is lysine 58. DNA contacts are provided by histidine 92, arginine 111, and arginine 153. An FPG-type zinc finger spans residues 238-272; that stretch reads RVYGREGQKCFNCSSTILKTKNSGRSTFYCKTCQY. Residue arginine 262 is the Proton donor; for delta-elimination activity of the active site.

Belongs to the FPG family. As to quaternary structure, monomer. Requires Zn(2+) as cofactor.

It carries out the reaction Hydrolysis of DNA containing ring-opened 7-methylguanine residues, releasing 2,6-diamino-4-hydroxy-5-(N-methyl)formamidopyrimidine.. The catalysed reaction is 2'-deoxyribonucleotide-(2'-deoxyribose 5'-phosphate)-2'-deoxyribonucleotide-DNA = a 3'-end 2'-deoxyribonucleotide-(2,3-dehydro-2,3-deoxyribose 5'-phosphate)-DNA + a 5'-end 5'-phospho-2'-deoxyribonucleoside-DNA + H(+). Involved in base excision repair of DNA damaged by oxidation or by mutagenic agents. Acts as a DNA glycosylase that recognizes and removes damaged bases. Has a preference for oxidized purines, such as 7,8-dihydro-8-oxoguanine (8-oxoG). Has AP (apurinic/apyrimidinic) lyase activity and introduces nicks in the DNA strand. Cleaves the DNA backbone by beta-delta elimination to generate a single-strand break at the site of the removed base with both 3'- and 5'-phosphates. The chain is Formamidopyrimidine-DNA glycosylase from Rickettsia canadensis (strain McKiel).